Consider the following 261-residue polypeptide: Guanine nucleotide exchange factor BopE (261 aa).

The protein belongs to the GEF (guanine exchange factor) SopE family. Monomer. Interacts with human CDC42.

It is found in the secreted. Functionally, activator for both CDC42 and RAC1 by directly interacting with these Rho GTPases and acting as a guanine nucleotide exchange factor (GEF). This activation results in actin cytoskeleton rearrangements and stimulates membrane ruffling, thus promoting bacterial entry into non-phagocytic cells. This is Guanine nucleotide exchange factor BopE (bopE) from Burkholderia mallei (strain NCTC 10247).